The sequence spans 265 residues: Undecaprenyl-diphosphatase (265 aa).

The next 8 membrane-spanning stretches (helical) occupy residues 1 to 21 (MDIFQALFLGLLQGLTEFLPI), 39 to 59 (QGVGFDLSVHVGTLLAVVLYF), 84 to 104 (ALAWYLVIGTIPAGLAGLALL), 114 to 134 (ASVIFFTTLVFGILLGIADWL), 144 to 164 (LNWKDAVIVGIAQAMALVPGT), 187 to 207 (FSFLLAIPIIVLASAVKLLEV), 218 to 238 (GFLIGGVTSFLMAITAIHFFL), and 244 to 264 (VGMWPYVIYRIILAGVIYAVL).

Belongs to the UppP family.

It is found in the cell inner membrane. It carries out the reaction di-trans,octa-cis-undecaprenyl diphosphate + H2O = di-trans,octa-cis-undecaprenyl phosphate + phosphate + H(+). Its function is as follows. Catalyzes the dephosphorylation of undecaprenyl diphosphate (UPP). Confers resistance to bacitracin. This is Undecaprenyl-diphosphatase from Marinobacter nauticus (strain ATCC 700491 / DSM 11845 / VT8) (Marinobacter aquaeolei).